The chain runs to 209 residues: Small ribosomal subunit protein uS4 (209 aa).

The 62-residue stretch at 98-159 (RRLDSAVYRL…KSRKITRIND (62 aa)) folds into the S4 RNA-binding domain.

Belongs to the universal ribosomal protein uS4 family. In terms of assembly, part of the 30S ribosomal subunit. Contacts protein S5. The interaction surface between S4 and S5 is involved in control of translational fidelity.

In terms of biological role, one of the primary rRNA binding proteins, it binds directly to 16S rRNA where it nucleates assembly of the body of the 30S subunit. Functionally, with S5 and S12 plays an important role in translational accuracy. The protein is Small ribosomal subunit protein uS4 of Syntrophotalea carbinolica (strain DSM 2380 / NBRC 103641 / GraBd1) (Pelobacter carbinolicus).